The chain runs to 31 residues: Sarcolipin (31 aa).

Over 1 to 7 (MGINTRE) the chain is Cytoplasmic. A helical membrane pass occupies residues 8–26 (LFLNFTIVLITVILMWLLV). The Lumenal segment spans residues 27–31 (RSYQY).

The protein belongs to the sarcolipin family. Homooligomer. Can also form heterooligomers with other sarcoplasmic/endoplasmic reticulum calcium ATPase (SERCA) regulators ARLN, ERLN, PLN and STRIT1/DWORF. Monomer. Interacts with calcium ATPase ATP2A1/SERCA1. Interacts as a monomer with ATP2A2/SERCA2; the interaction decreases ATP2A2 Ca(2+) affinity. Interacts with VMP1; VMP1 competes with PLN and SLN to prevent them from forming an inhibitory complex with ATP2A2.

Its subcellular location is the sarcoplasmic reticulum membrane. The protein resides in the endoplasmic reticulum membrane. In terms of biological role, reversibly inhibits the activity of ATP2A1/SERCA1 and ATP2A2/SERCA2 in sarcoplasmic reticulum by decreasing the apparent affinity of the ATPase for Ca(2+). Also inhibits the activity of ATP2A3/SERCA3. Modulates calcium re-uptake during muscle relaxation and plays an important role in calcium homeostasis in muscle. Required for muscle-based, non-shivering thermogenesis. The chain is Sarcolipin from Homo sapiens (Human).